A 226-amino-acid polypeptide reads, in one-letter code: Killer cell lectin-like receptor subfamily E member 1 (226 aa).

Residues 1 to 28 form a disordered region; sequence MDEAPVTRSTLNVNSQQKSKAKNKIKNT. The Cytoplasmic portion of the chain corresponds to 1–68; that stretch reads MDEAPVTRST…GKGNCSPPWR (68 aa). Residues 7 to 18 show a composition bias toward polar residues; that stretch reads TRSTLNVNSQQK. Residues 69–89 traverse the membrane as a helical; Signal-anchor for type II membrane protein segment; sequence LLSSVLGAMCLLLMAVAMVMT. Over 90–226 the chain is Extracellular; that stretch reads TFTTKSSSER…ANKLTYICKK (137 aa). 3 disulfide bridges follow: C113/C124, C141/C224, and C202/C216. Positions 120–225 constitute a C-type lectin domain; it reads FRCSCYFFSK…CANKLTYICK (106 aa). N145 is a glycosylation site (N-linked (GlcNAc...) asparagine).

Heterodimer; with KLRI1 or KLRI2. As to expression, expressed in natural killer (NK) cells (at protein level). Also detected in natural killer T (NKT) cells (at protein level). Has little or no expression in T cells (at protein level).

Its subcellular location is the cell membrane. Lectin-like receptor for natural killer (NK) cells. Can either inhibit or activate NK cell cytotoxic activity, depending on its binding partner. Heterodimer formation with KLRI1 mediates NK cell inhibition whereas heterodimer formation with KLRI2 mediates NK cell activation. Plays a role in allogeneic recognition by the immune system. The polypeptide is Killer cell lectin-like receptor subfamily E member 1 (Mus musculus (Mouse)).